Reading from the N-terminus, the 213-residue chain is Orotate phosphoribosyltransferase (213 aa).

Lys-26 lines the 5-phospho-alpha-D-ribose 1-diphosphate pocket. 34-35 (FF) is an orotate binding site. Residues 72-73 (YK), Arg-99, Lys-100, Lys-103, His-105, and 124-132 (DDVITAGTA) each bind 5-phospho-alpha-D-ribose 1-diphosphate. Orotate contacts are provided by Thr-128 and Arg-156.

It belongs to the purine/pyrimidine phosphoribosyltransferase family. PyrE subfamily. Homodimer. It depends on Mg(2+) as a cofactor.

The catalysed reaction is orotidine 5'-phosphate + diphosphate = orotate + 5-phospho-alpha-D-ribose 1-diphosphate. It participates in pyrimidine metabolism; UMP biosynthesis via de novo pathway; UMP from orotate: step 1/2. Its function is as follows. Catalyzes the transfer of a ribosyl phosphate group from 5-phosphoribose 1-diphosphate to orotate, leading to the formation of orotidine monophosphate (OMP). The polypeptide is Orotate phosphoribosyltransferase (Thioalkalivibrio sulfidiphilus (strain HL-EbGR7)).